The sequence spans 24 residues: Brevinin-1E (24 aa).

Cysteine 18 and cysteine 24 form a disulfide bridge.

In terms of tissue distribution, expressed by the skin glands.

Its subcellular location is the secreted. Antimicrobial peptide. Stimulates insulin release by BRIN-BD11 cells in vitro. In Pelophylax saharicus (Sahara frog), this protein is Brevinin-1E.